We begin with the raw amino-acid sequence, 196 residues long: Aequorin-2 (196 aa).

A propeptide spanning residues Met1 to Ser7 is cleaved from the precursor. EF-hand domains follow at residues Arg18–Asn53, Asn54–Glu108, Asp117–Ile146, and Gln147–Thr182. Asp31, Asn33, Asn35, Lys37, and Glu42 together coordinate Ca(2+). May interact with the chromophore stretches follow at residues Ala47–Ala57, Ala62–Phe72, and Asn107–Asp117. Residues Asp124, Asp126, Asn128, Glu135, Asp160, Asp162, Ser164, Gln166, and Glu171 each contribute to the Ca(2+) site.

Belongs to the aequorin family. The reduction of the disulfide bond is necessary to regenerate aequorin from apoaequorin.

Functionally, ca(2+)-dependent bioluminescence photoprotein. Displays an emission peak at 470 nm (blue light). Trace amounts of calcium ion trigger the intramolecular oxidation of the chromophore, coelenterazine into coelenteramide and CO(2) with the concomitant emission of light. The polypeptide is Aequorin-2 (Aequorea victoria (Water jellyfish)).